The chain runs to 320 residues: o-succinylbenzoate synthase (320 aa).

K133 acts as the Proton donor in catalysis. Residues D161, E190, and D213 each coordinate Mg(2+). Residue K235 is the Proton acceptor of the active site.

This sequence belongs to the mandelate racemase/muconate lactonizing enzyme family. MenC type 1 subfamily. Requires a divalent metal cation as cofactor.

The enzyme catalyses (1R,6R)-6-hydroxy-2-succinyl-cyclohexa-2,4-diene-1-carboxylate = 2-succinylbenzoate + H2O. It participates in quinol/quinone metabolism; 1,4-dihydroxy-2-naphthoate biosynthesis; 1,4-dihydroxy-2-naphthoate from chorismate: step 4/7. The protein operates within quinol/quinone metabolism; menaquinone biosynthesis. In terms of biological role, converts 2-succinyl-6-hydroxy-2,4-cyclohexadiene-1-carboxylate (SHCHC) to 2-succinylbenzoate (OSB). This chain is o-succinylbenzoate synthase, found in Salmonella paratyphi C (strain RKS4594).